Reading from the N-terminus, the 282-residue chain is Bifunctional protein FolD (282 aa).

163 to 165 is a binding site for NADP(+); it reads GRS.

Belongs to the tetrahydrofolate dehydrogenase/cyclohydrolase family. In terms of assembly, homodimer.

It carries out the reaction (6R)-5,10-methylene-5,6,7,8-tetrahydrofolate + NADP(+) = (6R)-5,10-methenyltetrahydrofolate + NADPH. It catalyses the reaction (6R)-5,10-methenyltetrahydrofolate + H2O = (6R)-10-formyltetrahydrofolate + H(+). The protein operates within one-carbon metabolism; tetrahydrofolate interconversion. Its function is as follows. Catalyzes the oxidation of 5,10-methylenetetrahydrofolate to 5,10-methenyltetrahydrofolate and then the hydrolysis of 5,10-methenyltetrahydrofolate to 10-formyltetrahydrofolate. This chain is Bifunctional protein FolD, found in Leuconostoc citreum (strain KM20).